An 84-amino-acid polypeptide reads, in one-letter code: Cytochrome b559 subunit alpha (84 aa).

Residues 22–36 (IIHIPAITILFASGF) form a helical membrane-spanning segment. His24 contacts heme.

Belongs to the PsbE/PsbF family. As to quaternary structure, heterodimer of an alpha subunit and a beta subunit. PSII is composed of 1 copy each of membrane proteins PsbA, PsbB, PsbC, PsbD, PsbE, PsbF, PsbH, PsbI, PsbJ, PsbK, PsbL, PsbM, PsbT, PsbX, Psb30/Ycf12, peripheral proteins PsbO, CyanoQ (PsbQ), PsbU, PsbV and a large number of cofactors. It forms dimeric complexes. Heme b serves as cofactor.

It localises to the cell inner membrane. Its function is as follows. This b-type cytochrome is tightly associated with the reaction center of photosystem II (PSII). PSII is a light-driven water:plastoquinone oxidoreductase that uses light energy to abstract electrons from H(2)O, generating O(2) and a proton gradient subsequently used for ATP formation. It consists of a core antenna complex that captures photons, and an electron transfer chain that converts photonic excitation into a charge separation. The protein is Cytochrome b559 subunit alpha of Gloeobacter violaceus (strain ATCC 29082 / PCC 7421).